Here is a 238-residue protein sequence, read N- to C-terminus: Probable transcriptional regulatory protein SSP2054 (238 aa).

Belongs to the TACO1 family. YeeN subfamily.

It is found in the cytoplasm. In Staphylococcus saprophyticus subsp. saprophyticus (strain ATCC 15305 / DSM 20229 / NCIMB 8711 / NCTC 7292 / S-41), this protein is Probable transcriptional regulatory protein SSP2054.